We begin with the raw amino-acid sequence, 429 residues long: UDP-N-acetylglucosamine 1-carboxyvinyltransferase (429 aa).

Residue 22–23 participates in phosphoenolpyruvate binding; sequence KN. Residue Arg-102 coordinates UDP-N-acetyl-alpha-D-glucosamine. Cys-126 (proton donor) is an active-site residue. Cys-126 carries the post-translational modification 2-(S-cysteinyl)pyruvic acid O-phosphothioketal. Residues 131-135, Asp-316, and Ile-338 contribute to the UDP-N-acetyl-alpha-D-glucosamine site; that span reads RPVDL.

Belongs to the EPSP synthase family. MurA subfamily.

The protein resides in the cytoplasm. It catalyses the reaction phosphoenolpyruvate + UDP-N-acetyl-alpha-D-glucosamine = UDP-N-acetyl-3-O-(1-carboxyvinyl)-alpha-D-glucosamine + phosphate. It participates in cell wall biogenesis; peptidoglycan biosynthesis. Cell wall formation. Adds enolpyruvyl to UDP-N-acetylglucosamine. The chain is UDP-N-acetylglucosamine 1-carboxyvinyltransferase from Rhodopseudomonas palustris (strain BisA53).